A 699-amino-acid polypeptide reads, in one-letter code: Auxin response factor 10 (699 aa).

3 disordered regions span residues 108-136, 505-533, and 551-595; these read AAEA…DANN, TDLT…DDTK, and KNGN…SWSL. Residues 110–119 are compositionally biased toward basic and acidic residues; it reads EARREEENSR. The span at 125-135 shows a compositional bias: polar residues; the sequence is FAKTLTQSDAN. A DNA-binding region (TF-B3) is located at residues 125-227; it reads FAKTLTQSDA…NIHVGLRRAK (103 aa). A compositionally biased stretch (polar residues) spans 570 to 593; the sequence is PNTSEGSDSGVTQGSPTKNTTPSW. One can recognise a PB1 domain in the interval 613–693; the sequence is PGQCKVFVES…RKLRILTDAG (81 aa).

This sequence belongs to the ARF family. As to quaternary structure, homodimers and heterodimers.

It is found in the nucleus. Its function is as follows. Auxin response factors (ARFs) are transcriptional factors that bind specifically to the DNA sequence 5'-TGTCTC-3' found in the auxin-responsive promoter elements (AuxREs). The protein is Auxin response factor 10 (ARF10) of Oryza sativa subsp. indica (Rice).